We begin with the raw amino-acid sequence, 120 residues long: Holo-[acyl-carrier-protein] synthase (120 aa).

Mg(2+)-binding residues include Asp-8 and Glu-58.

Belongs to the P-Pant transferase superfamily. AcpS family. Mg(2+) is required as a cofactor.

Its subcellular location is the cytoplasm. It catalyses the reaction apo-[ACP] + CoA = holo-[ACP] + adenosine 3',5'-bisphosphate + H(+). Functionally, transfers the 4'-phosphopantetheine moiety from coenzyme A to a Ser of acyl-carrier-protein. The chain is Holo-[acyl-carrier-protein] synthase from Anoxybacillus flavithermus (strain DSM 21510 / WK1).